Reading from the N-terminus, the 196-residue chain is MAPVVQQPAPSFKKTAVVDGVFEEVTLEQYKGKWVLLAFIPLAFTFVCPSEIIAYSEAVKKFAEKDAQVLFASTDSEYTWLAWTNVARKDGGIGKVDFPVLADTNHSLSRDYGVLIEEEGVALRGIFLIDPKGVLRQITINDLPVGRSVEESLRLLEAFQFTEKYGEVCPANWHPGDETIKPSPEASKEYFNKVNK.

The 159-residue stretch at 3 to 161 (PVVQQPAPSF…SLRLLEAFQF (159 aa)) folds into the Thioredoxin domain. 45–47 (TFV) is a binding site for substrate. C48 (cysteine sulfenic acid (-SOH) intermediate) is an active-site residue. R124 contributes to the substrate binding site. Positions 173–196 (WHPGDETIKPSPEASKEYFNKVNK) are disordered. The segment covering 175 to 196 (PGDETIKPSPEASKEYFNKVNK) has biased composition (basic and acidic residues).

It belongs to the peroxiredoxin family. AhpC/Prx1 subfamily. Homodimer; disulfide-linked, upon oxidation.

The protein localises to the cell surface. Its subcellular location is the nucleus. It is found in the cytoplasm. The enzyme catalyses a hydroperoxide + [thioredoxin]-dithiol = an alcohol + [thioredoxin]-disulfide + H2O. Its function is as follows. Thiol-specific peroxidase that catalyzes the reduction of hydrogen peroxide and organic hydroperoxides to water and alcohols, respectively. Plays a role in cell protection against oxidative stress by detoxifying peroxides and as sensor of hydrogen peroxide-mediated signaling events. Also involved in the correct composition of the hyphal cell wall. The chain is Peroxiredoxin TSA1-B from Candida albicans (strain SC5314 / ATCC MYA-2876) (Yeast).